Reading from the N-terminus, the 446-residue chain is Glutamine synthetase (446 aa).

The GS beta-grasp domain maps to 14–107; that stretch reads NNVKFLRFQF…IICDVYRKNG (94 aa). Residues 114–446 form the GS catalytic domain; it reads PRGCLKRVLA…DWEFNKYVRI (333 aa). Residues E138 and E140 each contribute to the Mg(2+) site. E187 lines the ATP pocket. Mg(2+) is bound by residues E192 and E199. Residues 243 to 244 and G244 each bind L-glutamate; that span reads NG. Residue H248 coordinates Mg(2+). S252 provides a ligand contact to ATP. 3 residues coordinate L-glutamate: R301, E307, and R319. The ATP site is built by R319, R324, and K331. E336 provides a ligand contact to Mg(2+). Position 338 (R338) interacts with L-glutamate.

It belongs to the glutamine synthetase family. In terms of assembly, oligomer of 12 subunits arranged in the form of two hexagons. Mg(2+) serves as cofactor.

Its subcellular location is the cytoplasm. The enzyme catalyses L-glutamate + NH4(+) + ATP = L-glutamine + ADP + phosphate + H(+). In terms of biological role, probably involved in nitrogen metabolism via ammonium assimilation. Catalyzes the ATP-dependent biosynthesis of glutamine from glutamate and ammonia. The protein is Glutamine synthetase of Methanococcus voltae.